The sequence spans 295 residues: 4-diphosphocytidyl-2-C-methyl-D-erythritol kinase (295 aa).

K18 is a catalytic residue. 101–111 is an ATP binding site; sequence PMGGGIGGGSS. The active site involves D143.

It belongs to the GHMP kinase family. IspE subfamily.

The catalysed reaction is 4-CDP-2-C-methyl-D-erythritol + ATP = 4-CDP-2-C-methyl-D-erythritol 2-phosphate + ADP + H(+). The protein operates within isoprenoid biosynthesis; isopentenyl diphosphate biosynthesis via DXP pathway; isopentenyl diphosphate from 1-deoxy-D-xylulose 5-phosphate: step 3/6. Catalyzes the phosphorylation of the position 2 hydroxy group of 4-diphosphocytidyl-2C-methyl-D-erythritol. The polypeptide is 4-diphosphocytidyl-2-C-methyl-D-erythritol kinase (Vibrio cholerae serotype O1 (strain ATCC 39315 / El Tor Inaba N16961)).